A 337-amino-acid polypeptide reads, in one-letter code: MSDLKPFVAKVAAREALSREDARAAFEIIMSGAATPSQIGGFLMALRVRGETVDEIVGAVGAMRARMLPVEAPDGAIDIVGTGGDGAGTYNISTLAALIVAGAGVPVAKHGNRALSSKSGTADALSCLGVNLDIGPAVISRCIAEAGLGFMFAQQHHSAMRHVGPTRVELGTRTIFNLLGPLANPAGVRQQLVGVYAPQWVDPLAEVLRDLGSESVWVVHGEGLDEITTTGVTKVAALKDGTITNFELTPADFGLERVSLDALKGGDGAHNAAALQAVLDGAENAYRDISLANAAASLMIAGRAGDLSEGMALARQSLSSGGAKVALQRLITVSNAA.

5-phospho-alpha-D-ribose 1-diphosphate-binding positions include glycine 81, 84 to 85, threonine 89, 91 to 94, 109 to 117, and threonine 121; these read GD, NIST, and KHGNRALSS. Glycine 81 is an anthranilate binding site. Serine 93 lines the Mg(2+) pocket. An anthranilate-binding site is contributed by asparagine 112. Residue arginine 167 coordinates anthranilate. The Mg(2+) site is built by aspartate 225 and glutamate 226.

The protein belongs to the anthranilate phosphoribosyltransferase family. In terms of assembly, homodimer. It depends on Mg(2+) as a cofactor.

It catalyses the reaction N-(5-phospho-beta-D-ribosyl)anthranilate + diphosphate = 5-phospho-alpha-D-ribose 1-diphosphate + anthranilate. It functions in the pathway amino-acid biosynthesis; L-tryptophan biosynthesis; L-tryptophan from chorismate: step 2/5. Catalyzes the transfer of the phosphoribosyl group of 5-phosphorylribose-1-pyrophosphate (PRPP) to anthranilate to yield N-(5'-phosphoribosyl)-anthranilate (PRA). The sequence is that of Anthranilate phosphoribosyltransferase from Rhizobium meliloti (strain 1021) (Ensifer meliloti).